The sequence spans 177 residues: Interleukin-1 receptor antagonist protein (177 aa).

The first 25 residues, 1–25 (MEIRRRSVRHLISLLLFLFYSETAC), serve as a signal peptide directing secretion. Cys91 and Cys141 form a disulfide bridge. Asn109 carries an N-linked (GlcNAc...) asparagine glycan.

This sequence belongs to the IL-1 family.

It is found in the secreted. In terms of biological role, anti-inflammatory antagonist of interleukin-1 family of proinflammatory cytokines such as interleukin-1beta/IL1B and interleukin-1alpha/IL1A. Protects from immune dysregulation and uncontrolled systemic inflammation triggered by IL1 for a range of innate stimulatory agents such as pathogens. The polypeptide is Interleukin-1 receptor antagonist protein (IL1RN) (Equus caballus (Horse)).